The primary structure comprises 349 residues: Peroxidase C3 (349 aa).

The N-terminal stretch at 1–29 (MGFSPLISCSAMGALILSCLLLQASNSNA) is a signal peptide. 4 disulfides stabilise this stretch: C40–C120, C73–C78, C126–C329, and C206–C238. H71 (proton acceptor) is an active-site residue. Ca(2+)-binding residues include D72, V75, G77, D79, and S81. Residue N86 is glycosylated (N-linked (GlcNAc...) asparagine). P168 is a substrate binding site. A heme b-binding site is contributed by H199. A Ca(2+)-binding site is contributed by T200. Residues N217 and N243 are each glycosylated (N-linked (GlcNAc...) asparagine). Residues D251, T254, and D259 each coordinate Ca(2+).

The protein belongs to the peroxidase family. Classical plant (class III) peroxidase subfamily. Ca(2+) serves as cofactor. Requires heme b as cofactor.

It localises to the secreted. Its subcellular location is the vacuole. It catalyses the reaction 2 a phenolic donor + H2O2 = 2 a phenolic radical donor + 2 H2O. In terms of biological role, removal of H(2)O(2), oxidation of toxic reductants, biosynthesis and degradation of lignin, suberization, auxin catabolism, response to environmental stresses such as wounding, pathogen attack and oxidative stress. These functions might be dependent on each isozyme/isoform in each plant tissue. The protein is Peroxidase C3 (PRXC3) of Armoracia rusticana (Horseradish).